The following is a 280-amino-acid chain: Small ribosomal subunit protein uS15m (280 aa).

This sequence belongs to the universal ribosomal protein uS15 family. In terms of assembly, component of the mitochondrial ribosome small subunit (28S) which comprises a 12S rRNA and about 30 distinct proteins. As to expression, expressed in anterior and posterior midgut primordia in stage 11 embryos. In stage 13 embryos, expression is high in the developing midgut and hindgut. In stage 16 embryos, expression is elevated in the midgut, hindgut, and in a small region that will give rise to pharyngeal muscles and to the stomatogastric nervous system. In larvae, expression is predominant in the gut, and head, presumably in pharyngeal muscles.

It is found in the mitochondrion. Its function is as follows. Essential for gut mitochondrial activity. Might be involved in tissue specific growth factor production. The chain is Small ribosomal subunit protein uS15m (bonsai) from Drosophila melanogaster (Fruit fly).